The primary structure comprises 376 residues: Mitogen-activated protein kinase ERK-A (376 aa).

Residues 38–326 (YIKLAYIGEG…VEEALAHPYL (289 aa)) enclose the Protein kinase domain. Residues 44–52 (IGEGAYGMV) and Lys-67 each bind ATP. The active-site Proton acceptor is the Asp-162. At Thr-198 the chain carries Phosphothreonine. Residues 198 to 200 (TEY) carry the TXY motif. Tyr-200 is subject to Phosphotyrosine.

Belongs to the protein kinase superfamily. CMGC Ser/Thr protein kinase family. MAP kinase subfamily. It depends on Mg(2+) as a cofactor. Dually phosphorylated on Thr-198 and Tyr-200, which activates the enzyme. Phosphorylated on tyrosine residue(s) in response to insulin. In terms of tissue distribution, in third instar larvae, expressed in eye imaginal disks. In adults, expressed in head and body.

It is found in the cytoplasm. The protein resides in the nucleus. It carries out the reaction L-seryl-[protein] + ATP = O-phospho-L-seryl-[protein] + ADP + H(+). The catalysed reaction is L-threonyl-[protein] + ATP = O-phospho-L-threonyl-[protein] + ADP + H(+). Its activity is regulated as follows. Activated by tyrosine and threonine phosphorylation. Its function is as follows. Serine/threonine kinase which acts as an essential component of the MAP kinase signal transduction pathway to regulate proliferation, differentiation and effect cell fate decisions in various tissues. Required downstream of phl/Raf in the sev/sevenless, tor/torso, and EGF receptor homolog Egfr signal transduction pathways. Required for embryonic epithelial tissue repair. During larval development, mediates Ptth/tor signaling leading to the production of ecdysone, a hormone required for the initiation of metamorphosis. The sequence is that of Mitogen-activated protein kinase ERK-A from Drosophila melanogaster (Fruit fly).